The sequence spans 320 residues: uncharacterized protein (320 aa).

7 consecutive transmembrane segments (helical) span residues 24 to 44 (FEFS…IFFI), 65 to 85 (FVLS…LWSL), 105 to 125 (TTSC…FIVV), 132 to 152 (SWFV…IAIL), 179 to 199 (ISLT…IYTF), 226 to 246 (MIPI…YFGY), and 253 to 275 (TSRW…MLSL).

It is found in the membrane. This is an uncharacterized protein from Caenorhabditis elegans.